The following is a 229-amino-acid chain: Triosephosphate isomerase (229 aa).

A substrate-binding site is contributed by 16–18; that stretch reads NFK. The active-site Electrophile is the histidine 100. Catalysis depends on glutamate 148, which acts as the Proton acceptor. Residues isoleucine 153, glycine 188, and 209 to 210 each bind substrate; that span reads AS.

This sequence belongs to the triosephosphate isomerase family. As to quaternary structure, homotetramer; dimer of dimers.

It localises to the cytoplasm. The catalysed reaction is D-glyceraldehyde 3-phosphate = dihydroxyacetone phosphate. It participates in carbohydrate biosynthesis; gluconeogenesis. Its pathway is carbohydrate degradation; glycolysis; D-glyceraldehyde 3-phosphate from glycerone phosphate: step 1/1. Its function is as follows. Involved in the gluconeogenesis. Catalyzes stereospecifically the conversion of dihydroxyacetone phosphate (DHAP) to D-glyceraldehyde-3-phosphate (G3P). The polypeptide is Triosephosphate isomerase (Methanothermobacter thermautotrophicus (strain ATCC 29096 / DSM 1053 / JCM 10044 / NBRC 100330 / Delta H) (Methanobacterium thermoautotrophicum)).